The following is a 260-amino-acid chain: Thiazole synthase (260 aa).

The active-site Schiff-base intermediate with DXP is the Lys102. Residues Gly163, Ala189–Gly190, and Asn211–Thr212 each bind 1-deoxy-D-xylulose 5-phosphate.

The protein belongs to the ThiG family. In terms of assembly, homotetramer. Forms heterodimers with either ThiH or ThiS.

It is found in the cytoplasm. It catalyses the reaction [ThiS sulfur-carrier protein]-C-terminal-Gly-aminoethanethioate + 2-iminoacetate + 1-deoxy-D-xylulose 5-phosphate = [ThiS sulfur-carrier protein]-C-terminal Gly-Gly + 2-[(2R,5Z)-2-carboxy-4-methylthiazol-5(2H)-ylidene]ethyl phosphate + 2 H2O + H(+). Its pathway is cofactor biosynthesis; thiamine diphosphate biosynthesis. Catalyzes the rearrangement of 1-deoxy-D-xylulose 5-phosphate (DXP) to produce the thiazole phosphate moiety of thiamine. Sulfur is provided by the thiocarboxylate moiety of the carrier protein ThiS. In vitro, sulfur can be provided by H(2)S. The chain is Thiazole synthase from Geobacter sulfurreducens (strain ATCC 51573 / DSM 12127 / PCA).